We begin with the raw amino-acid sequence, 590 residues long: MPLKQRVSSEKTGAFALLDSIVRHGVKHIFGYPGGAILPIYDELYAWEEASLIKHILVRHEQGAAHAADSYSRSTGEVGVCFATSGPGATNLVSGIATAHIDSVPILAITGQVGRAFIGTDAFQEVDIFGITLPIVKHSYVVRDPRDMSRIVAEAFFICKHGRPGPVLIDVPKDVGLEKFNYFSVEPGKVNIPGCRPITSLKSRQILMAAKMIQQSSQPLLYIGGGAIISDSHQIIKELVDFYKIPVTTTLMGKGIFNEDSDYCLGMLGMHGTAYANFAVSECDLLIALGARFDDRVTGKLDEFACNAQVIHVDIDPAEVGKNRIPQVAIVGDVAEVVSEILNLLKTSFPPYPEQIISWQERINRWRQQYPLLVPRKSTSISPQVILVATNKLAQNAYFTTDVGQHQMWSAQFLKVKAKHWLSSAGLGTMGYGLPAAIGAQVAHPNDVVICISGDSSFQMNMQELGTIAQYQLPVKIIIINNRWQGMVRQWQQAFYGERYSHSRMTEGAPDFQKLAEAFGIKAFTINNRQNMQSALQVAIDYPGPVLLDCQVTENENCYPMVAPGKSNAQMIGIAKPQRGTASNYINNSV.

Glutamate 61 provides a ligand contact to thiamine diphosphate. Residues arginine 163, 271-292 (HGTA…LGAR), and 314-333 (DIDP…IVGD) each bind FAD. The segment at 405–484 (QHQMWSAQFL…VKIIIINNRW (80 aa)) is thiamine pyrophosphate binding. Mg(2+) contacts are provided by aspartate 455 and asparagine 482.

Belongs to the TPP enzyme family. In terms of assembly, dimer of large and small chains. Mg(2+) serves as cofactor. Thiamine diphosphate is required as a cofactor.

The protein localises to the plastid. The protein resides in the chloroplast. It catalyses the reaction 2 pyruvate + H(+) = (2S)-2-acetolactate + CO2. It functions in the pathway amino-acid biosynthesis; L-isoleucine biosynthesis; L-isoleucine from 2-oxobutanoate: step 1/4. The protein operates within amino-acid biosynthesis; L-valine biosynthesis; L-valine from pyruvate: step 1/4. This Pyropia yezoensis (Susabi-nori) protein is Acetolactate synthase large subunit (ilvB).